The sequence spans 484 residues: ATP synthase subunit beta (484 aa).

An ATP-binding site is contributed by 168 to 175; that stretch reads GGAGVGKT.

Belongs to the ATPase alpha/beta chains family. In terms of assembly, F-type ATPases have 2 components, CF(1) - the catalytic core - and CF(0) - the membrane proton channel. CF(1) has five subunits: alpha(3), beta(3), gamma(1), delta(1), epsilon(1). CF(0) has three main subunits: a(1), b(2) and c(9-12). The alpha and beta chains form an alternating ring which encloses part of the gamma chain. CF(1) is attached to CF(0) by a central stalk formed by the gamma and epsilon chains, while a peripheral stalk is formed by the delta and b chains.

The protein localises to the cell membrane. It catalyses the reaction ATP + H2O + 4 H(+)(in) = ADP + phosphate + 5 H(+)(out). Its function is as follows. Produces ATP from ADP in the presence of a proton gradient across the membrane. The catalytic sites are hosted primarily by the beta subunits. The chain is ATP synthase subunit beta from Renibacterium salmoninarum (strain ATCC 33209 / DSM 20767 / JCM 11484 / NBRC 15589 / NCIMB 2235).